We begin with the raw amino-acid sequence, 227 residues long: Cytochrome c oxidase subunit 2 (227 aa).

Residues 1-14 (MAYPMQLGFQDATS) lie on the Mitochondrial intermembrane side of the membrane. A helical membrane pass occupies residues 15–45 (PIMEELLHFHDHTLMIVFLISSLVLYIISLM). Residues 46-59 (LTTKLTHTSTMDAQ) are Mitochondrial matrix-facing. Residues 60-87 (EVETIWTILPAIILILIALPSLRILYMM) form a helical membrane-spanning segment. The Mitochondrial intermembrane portion of the chain corresponds to 88–227 (DEINNPSLTV…YFEKWSASML (140 aa)). Cu cation contacts are provided by His-161, Cys-196, Glu-198, Cys-200, His-204, and Met-207. Glu-198 contributes to the Mg(2+) binding site. Tyr-218 is modified (phosphotyrosine).

The protein belongs to the cytochrome c oxidase subunit 2 family. In terms of assembly, component of the cytochrome c oxidase (complex IV, CIV), a multisubunit enzyme composed of 14 subunits. The complex is composed of a catalytic core of 3 subunits MT-CO1, MT-CO2 and MT-CO3, encoded in the mitochondrial DNA, and 11 supernumerary subunits COX4I, COX5A, COX5B, COX6A, COX6B, COX6C, COX7A, COX7B, COX7C, COX8 and NDUFA4, which are encoded in the nuclear genome. The complex exists as a monomer or a dimer and forms supercomplexes (SCs) in the inner mitochondrial membrane with NADH-ubiquinone oxidoreductase (complex I, CI) and ubiquinol-cytochrome c oxidoreductase (cytochrome b-c1 complex, complex III, CIII), resulting in different assemblies (supercomplex SCI(1)III(2)IV(1) and megacomplex MCI(2)III(2)IV(2)). Found in a complex with TMEM177, COA6, COX18, COX20, SCO1 and SCO2. Interacts with TMEM177 in a COX20-dependent manner. Interacts with COX20. Interacts with COX16. Requires Cu cation as cofactor.

The protein localises to the mitochondrion inner membrane. The catalysed reaction is 4 Fe(II)-[cytochrome c] + O2 + 8 H(+)(in) = 4 Fe(III)-[cytochrome c] + 2 H2O + 4 H(+)(out). Functionally, component of the cytochrome c oxidase, the last enzyme in the mitochondrial electron transport chain which drives oxidative phosphorylation. The respiratory chain contains 3 multisubunit complexes succinate dehydrogenase (complex II, CII), ubiquinol-cytochrome c oxidoreductase (cytochrome b-c1 complex, complex III, CIII) and cytochrome c oxidase (complex IV, CIV), that cooperate to transfer electrons derived from NADH and succinate to molecular oxygen, creating an electrochemical gradient over the inner membrane that drives transmembrane transport and the ATP synthase. Cytochrome c oxidase is the component of the respiratory chain that catalyzes the reduction of oxygen to water. Electrons originating from reduced cytochrome c in the intermembrane space (IMS) are transferred via the dinuclear copper A center (CU(A)) of subunit 2 and heme A of subunit 1 to the active site in subunit 1, a binuclear center (BNC) formed by heme A3 and copper B (CU(B)). The BNC reduces molecular oxygen to 2 water molecules using 4 electrons from cytochrome c in the IMS and 4 protons from the mitochondrial matrix. This chain is Cytochrome c oxidase subunit 2 (MT-CO2), found in Syncerus caffer (African buffalo).